The following is a 64-amino-acid chain: Large ribosomal subunit protein uL29 (64 aa).

The protein belongs to the universal ribosomal protein uL29 family.

In Thiobacillus denitrificans (strain ATCC 25259 / T1), this protein is Large ribosomal subunit protein uL29.